The chain runs to 1487 residues: Secretory phospholipase A2 receptor (1487 aa).

Positions 1 to 26 are cleaved as a signal peptide; sequence MVQWLAMLQLLWLQQLLLLGIHQGIA. Over 27–1396 the chain is Extracellular; sequence QDLTHIQEPS…AQPEKGLSHS (1370 aa). Residues 42-165 form the Ricin B-type lectin domain; that stretch reads KGIFIIQSES…SSGGDICEHP (124 aa). 4 cysteine pairs are disulfide-bonded: cysteine 55/cysteine 68, cysteine 93/cysteine 110, cysteine 181/cysteine 207, and cysteine 195/cysteine 222. Asparagine 97 carries N-linked (GlcNAc...) asparagine glycosylation. Positions 176-224 constitute a Fibronectin type-II domain; the sequence is AHGMPCVFPFQFKGHWHHDCIREGQKEHLLWCATTSRYEEDEKWGFCPD. The N-linked (GlcNAc...) asparagine glycan is linked to asparagine 239. 6 C-type lectin domains span residues 241–357, 387–504, 524–643, 673–797, 819–938, and 964–1095; these read SSRI…YICK, FNRK…YICK, HGRF…MSLC, GLAS…WICR, YQNA…SICK, and FNYK…GFVC. Intrachain disulfides connect cysteine 263–cysteine 356, cysteine 333–cysteine 348, cysteine 408–cysteine 503, cysteine 480–cysteine 495, cysteine 617–cysteine 634, cysteine 699–cysteine 796, cysteine 774–cysteine 788, cysteine 840–cysteine 937, cysteine 914–cysteine 929, and cysteine 1066–cysteine 1086. A glycan (N-linked (GlcNAc...) asparagine) is linked at asparagine 928. N-linked (GlcNAc...) asparagine glycosylation is found at asparagine 1107, asparagine 1122, and asparagine 1131. C-type lectin domains follow at residues 1120–1231 and 1256–1377; these read YGNR…GAIC and FKGN…FICK. 3 disulfides stabilise this stretch: cysteine 1208–cysteine 1222, cysteine 1279–cysteine 1376, and cysteine 1353–cysteine 1368. A helical membrane pass occupies residues 1397–1417; that stretch reads IVPVTVTLTLIIALGIFMLCF. The Cytoplasmic segment spans residues 1418-1487; the sequence is WIYKQKSDIF…HKGRPICISP (70 aa). The Endocytosis signal motif lies at 1435–1441; sequence GSYYPTL. Residues 1463–1475 show a composition bias toward basic and acidic residues; that stretch reads DEEVRDAPATESK. A disordered region spans residues 1463 to 1487; that stretch reads DEEVRDAPATESKRGHKGRPICISP.

Interacts with sPLA2-IB/PLA2G1B; this interaction mediates intracellular signaling as well as clearance of extracellular sPLA2-IB/PLA2G1B via endocytotic pathway. Interacts with sPLA2-X/PLA2G10; this interaction mediates sPLA2-X/PLA2G10 clearance and inactivation. Post-translationally, the secretory phospholipase A2 receptor form may be produced by the action of metalloproteinases. It contains all extracellular domains and only lacks transmembrane and cytosolic regions. It is however unclear whether this form is produced by proteolytic cleavage as suggested by some experiments reported by PubMed:11830583, or by alternative splicing. As to expression, widely expressed. Present in type II alveolar epithelial cells and a subset of splenic lymphocytes. Present at the surface of polymorphonuclear neutrophils (at protein level).

It is found in the cell membrane. The protein localises to the secreted. Functionally, receptor for secretory phospholipase A2 (sPLA2). Acts as a receptor for phospholipases sPLA2-IB/PLA2G1B, sPLA2-X/PLA2G10 and, with lower affinity, sPLA2-IIA/PLA2G2A. Also able to bind to snake PA2-like toxins. Although its precise function remains unclear, binding of sPLA2 to its receptor participates in both positive and negative regulation of sPLA2 functions as well as clearance of sPLA2. Binding of sPLA2-IB/PLA2G1B induces various effects depending on the cell type, such as activation of the mitogen-activated protein kinase (MAPK) cascade to induce cell proliferation, the production of lipid mediators, selective release of arachidonic acid in bone marrow-derived mast cells. In neutrophils, binding of sPLA2-IB/PLA2G1B can activate p38 MAPK to stimulate elastase release and cell adhesion. May be involved in responses in pro-inflammatory cytokine productions during endotoxic shock. Also has endocytic properties and rapidly internalizes sPLA2 ligands, which is particularly important for the clearance of extracellular sPLA2s to protect their potent enzymatic activities. The soluble secretory phospholipase A2 receptor form is circulating and acts as a negative regulator of sPLA2 functions by blocking the biological functions of sPLA2-IB/PLA2G1B and sPLA2-X/PLA2G10. In podocytes, binding of sPLA2-IB/PLA2G1B can regulate podocyte survival and glomerular homeostasis. The protein is Secretory phospholipase A2 receptor (Pla2r1) of Mus musculus (Mouse).